Reading from the N-terminus, the 512-residue chain is Probable malate:quinone oxidoreductase (512 aa).

The protein belongs to the MQO family. FAD is required as a cofactor.

It catalyses the reaction (S)-malate + a quinone = a quinol + oxaloacetate. It participates in carbohydrate metabolism; tricarboxylic acid cycle; oxaloacetate from (S)-malate (quinone route): step 1/1. This is Probable malate:quinone oxidoreductase from Bradyrhizobium diazoefficiens (strain JCM 10833 / BCRC 13528 / IAM 13628 / NBRC 14792 / USDA 110).